We begin with the raw amino-acid sequence, 125 residues long: UPF0325 protein Ping_0715 (125 aa).

Belongs to the UPF0325 family.

The chain is UPF0325 protein Ping_0715 from Psychromonas ingrahamii (strain DSM 17664 / CCUG 51855 / 37).